We begin with the raw amino-acid sequence, 145 residues long: Probable low molecular weight protein-tyrosine-phosphatase EpsP (145 aa).

The active-site Nucleophile is the Cys-9. Arg-15 is an active-site residue. Asp-114 (proton donor) is an active-site residue.

The protein belongs to the low molecular weight phosphotyrosine protein phosphatase family.

It carries out the reaction O-phospho-L-tyrosyl-[protein] + H2O = L-tyrosyl-[protein] + phosphate. It participates in glycan metabolism; exopolysaccharide biosynthesis. May be involved in assembly or function of the EPS I polymerization/export complex and/or the EpsB ATPase. Alternatively it may function in the removal of the terminal phosphate from C55-isoprenyl pyrophosphate in order to recycle the C55-isoprenyl phosphate lipid carrier used in the synthesis of polysaccharide repeat units. This chain is Probable low molecular weight protein-tyrosine-phosphatase EpsP (epsP), found in Ralstonia nicotianae (strain ATCC BAA-1114 / GMI1000) (Ralstonia solanacearum).